The chain runs to 282 residues: uncharacterized protein (282 aa).

Residues 205–277 (LAQQRRVYAQ…DELQNKARDA (73 aa)) adopt a coiled-coil conformation.

This is an uncharacterized protein from Treponema pallidum (strain Nichols).